The following is a 166-amino-acid chain: uncharacterized protein (166 aa).

To M.jannaschii MJ0992.

This is an uncharacterized protein from Methanocaldococcus jannaschii (strain ATCC 43067 / DSM 2661 / JAL-1 / JCM 10045 / NBRC 100440) (Methanococcus jannaschii).